Consider the following 266-residue polypeptide: Cytosolic Fe-S cluster assembly factor Nubp2 homolog (266 aa).

Residue Gly14–Ser21 coordinates ATP. Residues Cys188 and Cys191 each coordinate [4Fe-4S] cluster.

The protein belongs to the Mrp/NBP35 ATP-binding proteins family. Nubp2/CFD1 subfamily. As to quaternary structure, heterotetramer of 2 Nubp1 and 2 Nubp2 chains. The cofactor is [4Fe-4S] cluster.

The protein localises to the cytoplasm. Its function is as follows. Component of the cytosolic iron-sulfur (Fe/S) protein assembly (CIA) machinery. Required for maturation of extramitochondrial Fe-S proteins. The Nubp1-Nubp2 heterotetramer forms a Fe-S scaffold complex, mediating the de novo assembly of an Fe-S cluster and its transfer to target apoproteins. This is Cytosolic Fe-S cluster assembly factor Nubp2 homolog from Drosophila virilis (Fruit fly).